The chain runs to 467 residues: Zinc finger and BTB domain-containing protein 43 (467 aa).

Position 1 is an N-acetylmethionine (Met1). The BTB domain maps to Cys33 to Ala97. 2 disordered regions span residues Leu134 to Glu153 and His162 to Tyr227. Residues His140–Asn149 show a composition bias toward polar residues. Basic and acidic residues-rich tracts occupy residues Asp164 to Gly174 and Lys182 to Tyr194. Residues Lys182, Lys247, Lys297, and Lys358 each participate in a glycyl lysine isopeptide (Lys-Gly) (interchain with G-Cter in SUMO2) cross-link. The C2H2-type 1; atypical zinc-finger motif lies at Tyr373 to His394. A C2H2-type 2 zinc finger spans residues Tyr400 to His422. Thr423 bears the Phosphothreonine mark. The C2H2-type 3; atypical zinc-finger motif lies at Tyr428–Cys450. Lys458 participates in a covalent cross-link: Glycyl lysine isopeptide (Lys-Gly) (interchain with G-Cter in SUMO2).

It belongs to the krueppel C2H2-type zinc-finger protein family. Interacts with BDP1.

It is found in the nucleus. Functionally, may be involved in transcriptional regulation. The protein is Zinc finger and BTB domain-containing protein 43 (Zbtb43) of Mus musculus (Mouse).